The sequence spans 136 residues: ATP synthase F(0) complex subunit C1, mitochondrial (136 aa).

Residues 1 to 61 (MQTTKALLIS…REFQTSVISR (61 aa)) constitute a mitochondrion transit peptide. The chain crosses the membrane as a helical span at residues 77-97 (VGVAGSGAGIGTVFGSLIIGY). Position 104 is an N6,N6,N6-trimethyllysine (Lys104). The chain crosses the membrane as a helical span at residues 112–132 (ILGFALSEAMGLFCLMVAFLI).

This sequence belongs to the ATPase C chain family. Homooctamer; the c-ring consists of eight c subunits forming a circle, and each subunit adopts a hairpin shape. Component of the ATP synthase complex composed at least of ATP5F1A/subunit alpha, ATP5F1B/subunit beta, ATP5MC1/subunit c (homooctomer), MT-ATP6/subunit a, MT-ATP8/subunit 8, ATP5ME/subunit e, ATP5MF/subunit f, ATP5MG/subunit g, ATP5MK/subunit k, ATP5MJ/subunit j, ATP5F1C/subunit gamma, ATP5F1D/subunit delta, ATP5F1E/subunit epsilon, ATP5PF/subunit F6, ATP5PB/subunit b, ATP5PD/subunit d, ATP5PO/subunit OSCP. ATP synthase complex consists of a soluble F(1) head domain (subunits alpha(3) and beta(3)) - the catalytic core - and a membrane F(0) domain - the membrane proton channel (subunits c, a, 8, e, f, g, k and j). These two domains are linked by a central stalk (subunits gamma, delta, and epsilon) rotating inside the F1 region and a stationary peripheral stalk (subunits F6, b, d, and OSCP). Interacts with TMEM70 (homooligomer form); this interaction facilitates the oligomer formation of subunit c/ATP5MC1 (c-ring) and the c-ring membrane insertion and also protects ATP5MC1 against intramitochondrial proteolysis. Trimethylated by ATPSCKMT at Lys-104. Methylation is required for proper incorporation of the C subunit into the ATP synthase complex and mitochondrial respiration.

It is found in the mitochondrion membrane. It carries out the reaction H(+)(in) = H(+)(out). Subunit c, of the mitochondrial membrane ATP synthase complex (F(1)F(0) ATP synthase or Complex V) that produces ATP from ADP in the presence of a proton gradient across the membrane which is generated by electron transport complexes of the respiratory chain. ATP synthase complex consist of a soluble F(1) head domain - the catalytic core - and a membrane F(1) domain - the membrane proton channel. These two domains are linked by a central stalk rotating inside the F(1) region and a stationary peripheral stalk. During catalysis, ATP synthesis in the catalytic domain of F(1) is coupled via a rotary mechanism of the central stalk subunits to proton translocation. With the subunit a (MT-ATP6), forms the proton-conducting channel in the F(0) domain, that contains two crucial half-channels (inlet and outlet) that facilitate proton movement from the mitochondrial intermembrane space (IMS) into the matrix. Protons are taken up via the inlet half-channel and released through the outlet half-channel, following a Grotthuss mechanism. This is ATP synthase F(0) complex subunit C1, mitochondrial from Rattus norvegicus (Rat).